Here is a 390-residue protein sequence, read N- to C-terminus: GTPase Obg (390 aa).

The region spanning 1–159 (MKFVDEATIL…RELTLELLLL (159 aa)) is the Obg domain. The disordered stretch occupies residues 128–147 (SRFKSSVNRAPRQKTNGTKG). Residues 129 to 145 (RFKSSVNRAPRQKTNGT) show a composition bias toward polar residues. The 174-residue stretch at 160–333 (ADVGMLGLPN…LCWDVMNFLK (174 aa)) folds into the OBG-type G domain. Residues 166-173 (GLPNAGKS), 191-195 (FTTLV), 213-216 (DIPG), 283-286 (NKVD), and 314-316 (SAA) contribute to the GTP site. Mg(2+)-binding residues include serine 173 and threonine 193.

The protein belongs to the TRAFAC class OBG-HflX-like GTPase superfamily. OBG GTPase family. As to quaternary structure, monomer. It depends on Mg(2+) as a cofactor.

The protein localises to the cytoplasm. Functionally, an essential GTPase which binds GTP, GDP and possibly (p)ppGpp with moderate affinity, with high nucleotide exchange rates and a fairly low GTP hydrolysis rate. Plays a role in control of the cell cycle, stress response, ribosome biogenesis and in those bacteria that undergo differentiation, in morphogenesis control. The polypeptide is GTPase Obg (Pectobacterium atrosepticum (strain SCRI 1043 / ATCC BAA-672) (Erwinia carotovora subsp. atroseptica)).